The following is a 195-amino-acid chain: Small ribosomal subunit protein uS4c (195 aa).

The S4 RNA-binding domain maps to 82-143 (MRLDNILFRL…KQRSKALIQN (62 aa)).

It belongs to the universal ribosomal protein uS4 family. As to quaternary structure, part of the 30S ribosomal subunit. Contacts protein S5. The interaction surface between S4 and S5 is involved in control of translational fidelity.

It is found in the plastid. The protein localises to the chloroplast. One of the primary rRNA binding proteins, it binds directly to 16S rRNA where it nucleates assembly of the body of the 30S subunit. In terms of biological role, with S5 and S12 plays an important role in translational accuracy. In Pillansia templemannii, this protein is Small ribosomal subunit protein uS4c (rps4).